A 158-amino-acid chain; its full sequence is Cyclic pyranopterin monophosphate synthase (158 aa).

Substrate is bound by residues 75 to 77 (LCH) and 113 to 114 (ME). D128 is an active-site residue.

It belongs to the MoaC family. As to quaternary structure, homohexamer; trimer of dimers.

It carries out the reaction (8S)-3',8-cyclo-7,8-dihydroguanosine 5'-triphosphate = cyclic pyranopterin phosphate + diphosphate. The protein operates within cofactor biosynthesis; molybdopterin biosynthesis. In terms of biological role, catalyzes the conversion of (8S)-3',8-cyclo-7,8-dihydroguanosine 5'-triphosphate to cyclic pyranopterin monophosphate (cPMP). This chain is Cyclic pyranopterin monophosphate synthase, found in Actinobacillus succinogenes (strain ATCC 55618 / DSM 22257 / CCUG 43843 / 130Z).